The primary structure comprises 368 residues: MMNSSQTLVVKLGTSVLTGGSRRLNRAHIVELVRQCAQQHEKGHRIIIVTSGAIAAGREHLGYPDLPATIASKQLLAAVGQSRLIQLWEQFFSIYGIHVGQMLLTRADLEDRERFLNARDTLQALLDNRIVPVINENDAVATAEIKVGDNDNLSALAAILGGADKLLLLTDIEGLYTADPRNNPDAKLIPEVYDISDELRMVAGDSISGLGTGGMATKLQAAGIAGRAGIDVIIAAGNKPDVISDVIEGNPVGTRFHGLESPMENRKRWIFGAPPAGEIIVDHGAETAICEKGSSLLPKGIKNIKGDFSRGEVICIRSLSGKDLAHGVCRYNSDALRLIAGHHSQQISQILGYEYGAVAVHRDDMIVS.

Lys11 is an ATP binding site. Substrate-binding residues include Ser51, Asp138, and Asn150. ATP contacts are provided by residues 170-171 and 212-218; these read TD and TGGMATK. The PUA domain occupies 276–354; the sequence is AGEIIVDHGA…QQISQILGYE (79 aa).

The protein belongs to the glutamate 5-kinase family.

It localises to the cytoplasm. The enzyme catalyses L-glutamate + ATP = L-glutamyl 5-phosphate + ADP. It participates in amino-acid biosynthesis; L-proline biosynthesis; L-glutamate 5-semialdehyde from L-glutamate: step 1/2. Functionally, catalyzes the transfer of a phosphate group to glutamate to form L-glutamate 5-phosphate. In Photorhabdus laumondii subsp. laumondii (strain DSM 15139 / CIP 105565 / TT01) (Photorhabdus luminescens subsp. laumondii), this protein is Glutamate 5-kinase.